Reading from the N-terminus, the 372-residue chain is Tyrosine--tRNA ligase (372 aa).

Y37, Y169, Q173, D176, and Q191 together coordinate L-tyrosine. A 'KMSKS' region motif is present at residues 246 to 250; it reads KMSKS. K249 serves as a coordination point for ATP.

It belongs to the class-I aminoacyl-tRNA synthetase family. TyrS type 4 subfamily. As to quaternary structure, homodimer.

It localises to the cytoplasm. The enzyme catalyses tRNA(Tyr) + L-tyrosine + ATP = L-tyrosyl-tRNA(Tyr) + AMP + diphosphate + H(+). In terms of biological role, catalyzes the attachment of tyrosine to tRNA(Tyr) in a two-step reaction: tyrosine is first activated by ATP to form Tyr-AMP and then transferred to the acceptor end of tRNA(Tyr). The chain is Tyrosine--tRNA ligase from Pyrobaculum arsenaticum (strain DSM 13514 / JCM 11321 / PZ6).